The following is a 555-amino-acid chain: CTP synthase (555 aa).

The amidoligase domain stretch occupies residues 1 to 271; that stretch reads MVKRGKKTKY…DDKLAELFNI (271 aa). Serine 19 lines the CTP pocket. Residue serine 19 coordinates UTP. ATP contacts are provided by residues 20 to 25 and aspartate 77; that span reads SLGKGL. Residues aspartate 77 and glutamate 145 each contribute to the Mg(2+) site. CTP is bound by residues 152–154, 192–197, and lysine 228; these read DIE and KTKPTQ. Residues 192–197 and lysine 228 each bind UTP; that span reads KTKPTQ. The 241-residue stretch at 297-537 folds into the Glutamine amidotransferase type-1 domain; that stretch reads RIGIVGKYVE…VKAALEHRDA (241 aa). Glycine 358 contributes to the L-glutamine binding site. Cysteine 385 functions as the Nucleophile; for glutamine hydrolysis in the catalytic mechanism. L-glutamine is bound by residues 386–389, glutamate 409, and arginine 466; that span reads LGLQ. Catalysis depends on residues histidine 510 and glutamate 512. A disordered region spans residues 536-555; it reads DAQQRQPSAEVKKLPVGKNG.

Belongs to the CTP synthase family. Homotetramer.

The enzyme catalyses UTP + L-glutamine + ATP + H2O = CTP + L-glutamate + ADP + phosphate + 2 H(+). It catalyses the reaction L-glutamine + H2O = L-glutamate + NH4(+). It carries out the reaction UTP + NH4(+) + ATP = CTP + ADP + phosphate + 2 H(+). The protein operates within pyrimidine metabolism; CTP biosynthesis via de novo pathway; CTP from UDP: step 2/2. With respect to regulation, allosterically activated by GTP, when glutamine is the substrate; GTP has no effect on the reaction when ammonia is the substrate. The allosteric effector GTP functions by stabilizing the protein conformation that binds the tetrahedral intermediate(s) formed during glutamine hydrolysis. Inhibited by the product CTP, via allosteric rather than competitive inhibition. Its function is as follows. Catalyzes the ATP-dependent amination of UTP to CTP with either L-glutamine or ammonia as the source of nitrogen. Regulates intracellular CTP levels through interactions with the four ribonucleotide triphosphates. The protein is CTP synthase of Anaeromyxobacter dehalogenans (strain 2CP-C).